The chain runs to 274 residues: Glucosamine-6-phosphate deaminase (274 aa).

Asp71 serves as the catalytic Proton acceptor; for enolization step. Residue Asp140 is the For ring-opening step of the active site. Catalysis depends on His142, which acts as the Proton acceptor; for ring-opening step. Catalysis depends on Glu147, which acts as the For ring-opening step.

This sequence belongs to the glucosamine/galactosamine-6-phosphate isomerase family. NagB subfamily.

It carries out the reaction alpha-D-glucosamine 6-phosphate + H2O = beta-D-fructose 6-phosphate + NH4(+). Its pathway is amino-sugar metabolism; N-acetylneuraminate degradation; D-fructose 6-phosphate from N-acetylneuraminate: step 5/5. Catalyzes the reversible isomerization-deamination of glucosamine 6-phosphate (GlcN6P) to form fructose 6-phosphate (Fru6P) and ammonium ion. The polypeptide is Glucosamine-6-phosphate deaminase (Fusobacterium nucleatum subsp. nucleatum (strain ATCC 25586 / DSM 15643 / BCRC 10681 / CIP 101130 / JCM 8532 / KCTC 2640 / LMG 13131 / VPI 4355)).